The primary structure comprises 637 residues: Chaperone protein DnaK (637 aa).

Thr-198 carries the phosphothreonine; by autocatalysis modification. The disordered stretch occupies residues 597-637; it reads MYQQQAEGDAARDAAQDAAKDDVVDAEFTEVDDDKNDKKSA. The segment covering 605–619 has biased composition (basic and acidic residues); the sequence is DAARDAAQDAAKDDV. A compositionally biased stretch (acidic residues) spans 620–630; sequence VDAEFTEVDDD.

Belongs to the heat shock protein 70 family.

Acts as a chaperone. The polypeptide is Chaperone protein DnaK (Afipia carboxidovorans (strain ATCC 49405 / DSM 1227 / KCTC 32145 / OM5) (Oligotropha carboxidovorans)).